The sequence spans 393 residues: S-adenosylmethionine synthase 1 (393 aa).

E9 serves as a coordination point for Mg(2+). H15 lines the ATP pocket. E43 contacts K(+). Residues E56 and Q99 each contribute to the L-methionine site. Residues 167-169, 235-238, D246, 252-253, A269, K273, and K277 each bind ATP; these read DGK, SGRF, and RK. Residue D246 coordinates L-methionine. Residue K277 participates in L-methionine binding.

It belongs to the AdoMet synthase family. As to quaternary structure, homotetramer. Mn(2+) serves as cofactor. It depends on Mg(2+) as a cofactor. The cofactor is Co(2+). K(+) is required as a cofactor. Requires NH4(+) as cofactor. Mostly expressed in roots, and, to a lower extent, in hypocotyls and cotyledons.

Its subcellular location is the cytoplasm. The catalysed reaction is L-methionine + ATP + H2O = S-adenosyl-L-methionine + phosphate + diphosphate. It participates in amino-acid biosynthesis; S-adenosyl-L-methionine biosynthesis; S-adenosyl-L-methionine from L-methionine: step 1/1. Inhibited by products of SAMS reaction (SAM, Pi, PPi), substrate analogs (cycloleucine and ethionine), and alternative nucleotides (GTP, CTP and ADP). Strongly repressed by PPPi. Functionally, catalyzes the formation of S-adenosylmethionine from methionine and ATP. The reaction comprises two steps that are both catalyzed by the same enzyme: formation of S-adenosylmethionine (AdoMet) and triphosphate, and subsequent hydrolysis of the triphosphate. The sequence is that of S-adenosylmethionine synthase 1 (SAMS1) from Catharanthus roseus (Madagascar periwinkle).